A 257-amino-acid polypeptide reads, in one-letter code: Probable enoyl-CoA hydratase echA8 (257 aa).

Belongs to the enoyl-CoA hydratase/isomerase family.

The enzyme catalyses a (3S)-3-hydroxyacyl-CoA = a (2E)-enoyl-CoA + H2O. It catalyses the reaction a 4-saturated-(3S)-3-hydroxyacyl-CoA = a (3E)-enoyl-CoA + H2O. Functionally, could possibly oxidize fatty acids using specific components. This is Probable enoyl-CoA hydratase echA8 (echA8) from Mycobacterium tuberculosis (strain CDC 1551 / Oshkosh).